A 162-amino-acid polypeptide reads, in one-letter code: 2-C-methyl-D-erythritol 2,4-cyclodiphosphate synthase (162 aa).

Positions 10 and 12 each coordinate a divalent metal cation. Residues D10–H12 and H36–S37 contribute to the 4-CDP-2-C-methyl-D-erythritol 2-phosphate site. Position 44 (H44) interacts with a divalent metal cation. Residues D58–G60, F63–D67, and R144 each bind 4-CDP-2-C-methyl-D-erythritol 2-phosphate.

Belongs to the IspF family. As to quaternary structure, homotrimer. The cofactor is a divalent metal cation.

It catalyses the reaction 4-CDP-2-C-methyl-D-erythritol 2-phosphate = 2-C-methyl-D-erythritol 2,4-cyclic diphosphate + CMP. The protein operates within isoprenoid biosynthesis; isopentenyl diphosphate biosynthesis via DXP pathway; isopentenyl diphosphate from 1-deoxy-D-xylulose 5-phosphate: step 4/6. In terms of biological role, involved in the biosynthesis of isopentenyl diphosphate (IPP) and dimethylallyl diphosphate (DMAPP), two major building blocks of isoprenoid compounds. Catalyzes the conversion of 4-diphosphocytidyl-2-C-methyl-D-erythritol 2-phosphate (CDP-ME2P) to 2-C-methyl-D-erythritol 2,4-cyclodiphosphate (ME-CPP) with a corresponding release of cytidine 5-monophosphate (CMP). In Burkholderia thailandensis (strain ATCC 700388 / DSM 13276 / CCUG 48851 / CIP 106301 / E264), this protein is 2-C-methyl-D-erythritol 2,4-cyclodiphosphate synthase.